The primary structure comprises 494 residues: Cytochrome P450 monooxygenase ccsD (494 aa).

Residues 5–25 (ISPRTLVLLAVTCSLLVLYFS) traverse the membrane as a helical segment. Heme is bound at residue Cys-438. N-linked (GlcNAc...) asparagine glycosylation is found at Asn-445 and Asn-477.

The protein belongs to the cytochrome P450 family. Heme serves as cofactor.

The protein localises to the membrane. It functions in the pathway mycotoxin biosynthesis. Functionally, cytochrome P450 monooxygenase; part of the gene cluster that mediates the biosynthesis of a family of the mycotoxins cytochalasins E and K. The hybrid PKS-NRPS synthetase ccsA and the enoyl reductase ccsC are responsible for fusion of phenylalanine with an octaketide backbone and subsequent release of the stable tetramic acid precursor. The polyketide synthase module (PKS) of the PKS-NRPS ccsA is responsible for the synthesis of the octaketide backbone. The downstream nonribosomal peptide synthetase (NRPS) amidates the carboxyl end of the octaketide with a phenylalanine. A reductase-like domain (R) at the C-terminus catalyzes the reductive release of the polyketide-amino acid intermediate. Because ccsA lacks a designated enoylreductase (ER) domain, the required activity is provided the enoyl reductase ccsC. Upon formation of the 11-membered carbocycle-fused perhydroisoindolone intermediate, a number of oxidative steps are required to afford the final cytochalasin E and K, including two hydroxylations at C17 and C18, one alcohol oxidation at C17, one epoxidation at C6 and C7 and two Baeyer-Villiger oxidations. The oxidative modification at C17, C18 and the C6-C7 epoxidation are likely to be catalyzed by the two cytochrome P450 oxygenases ccsD and ccsG. CcsD may be responsible for the epoxidation of the C6-C7 double bond. CcsG may be responsible for the successive oxidative modifications at C17 and C18. The double Baeyer-Villiger oxidations of ketocytochalasin to precytochalasin and cytochalasin Z(16) are among the final steps leading to cytochalasin E and K and are catalyzed by ccsB. The first oxygen insertion step follows that of the classic BVMO mechanism, generating the ester precytochalasin. Release of precytochalasin into an aqueous environment can generate the shunt product iso-precytochalasin through spontaneous isomerization. Alternatively, precytochalasin can undergo further oxidation by ccsB to yield the in-line carbonate-containing cytochalasin Z(16). Cytochalasin Z(16) is a precursor to cytochalasin E and cytochalasin K, whereas iso-precytochalasin is a precursor to cytochalasin Z(17) and rosellichalasin. The hydrolyase ccsE may catalyze hydrolysis of epoxide bond in cytochalasin E to afford cytochalasin K. The function of ccsF has not been assigned but it may play a role in post-PKS-NRPS biosynthetic step, resistance or transport of cytochalasins and related PKS-NRPS products. In Aspergillus clavatus (strain ATCC 1007 / CBS 513.65 / DSM 816 / NCTC 3887 / NRRL 1 / QM 1276 / 107), this protein is Cytochrome P450 monooxygenase ccsD.